Here is a 193-residue protein sequence, read N- to C-terminus: A-type ATP synthase subunit E (193 aa).

Belongs to the V-ATPase E subunit family. In terms of assembly, has multiple subunits with at least A(3), B(3), C, D, E, F, H, I and proteolipid K(x).

The protein resides in the cell membrane. In terms of biological role, component of the A-type ATP synthase that produces ATP from ADP in the presence of a proton gradient across the membrane. This Haloquadratum walsbyi (strain DSM 16790 / HBSQ001) protein is A-type ATP synthase subunit E.